A 310-amino-acid chain; its full sequence is Putative S-adenosyl-L-methionine-dependent methyltransferase MMAR_0357 (310 aa).

S-adenosyl-L-methionine-binding positions include Asp-132 and 161–162; that span reads DL.

It belongs to the UPF0677 family.

Its function is as follows. Exhibits S-adenosyl-L-methionine-dependent methyltransferase activity. This is Putative S-adenosyl-L-methionine-dependent methyltransferase MMAR_0357 from Mycobacterium marinum (strain ATCC BAA-535 / M).